The sequence spans 424 residues: UDP-N-acetylglucosamine 1-carboxyvinyltransferase (424 aa).

Lys22 to Asn23 provides a ligand contact to phosphoenolpyruvate. A UDP-N-acetyl-alpha-D-glucosamine-binding site is contributed by Arg98. Cys122 (proton donor) is an active-site residue. Position 122 is a 2-(S-cysteinyl)pyruvic acid O-phosphothioketal (Cys122). UDP-N-acetyl-alpha-D-glucosamine is bound by residues Arg127 to Gln131, Asp312, and Ile334.

It belongs to the EPSP synthase family. MurA subfamily.

It is found in the cytoplasm. It catalyses the reaction phosphoenolpyruvate + UDP-N-acetyl-alpha-D-glucosamine = UDP-N-acetyl-3-O-(1-carboxyvinyl)-alpha-D-glucosamine + phosphate. It functions in the pathway cell wall biogenesis; peptidoglycan biosynthesis. In terms of biological role, cell wall formation. Adds enolpyruvyl to UDP-N-acetylglucosamine. This is UDP-N-acetylglucosamine 1-carboxyvinyltransferase from Xanthomonas euvesicatoria pv. vesicatoria (strain 85-10) (Xanthomonas campestris pv. vesicatoria).